Here is a 552-residue protein sequence, read N- to C-terminus: Cholesterol oxidase (552 aa).

The segment at residues 1–45 (MTDSRANRADATRGVASVSRRRFLAGAGLTAGAIALSSMSTSASA) is a signal peptide (tat-type signal). The FAD site is built by Tyr66, Gly67, Glu86, Gly160, Asn164, Gly165, Met167, and Val295. Residues Glu406 and His492 each act as proton acceptor in the active site. Gly520 and Phe532 together coordinate FAD.

It belongs to the GMC oxidoreductase family. FAD is required as a cofactor. In terms of processing, predicted to be exported by the Tat system. The position of the signal peptide cleavage has been experimentally proven.

It localises to the secreted. It carries out the reaction cholesterol + O2 = cholest-5-en-3-one + H2O2. The enzyme catalyses cholest-5-en-3-one = cholest-4-en-3-one. Its pathway is steroid metabolism; cholesterol degradation. In terms of biological role, bifunctional enzyme that catalyzes the oxidation and isomerization of cholesterol to cholestenone (cholest-4-en-3-one), an initial step in the cholesterol degradation process. The polypeptide is Cholesterol oxidase (Brevibacterium sterolicum).